Here is a 126-residue protein sequence, read N- to C-terminus: Large ribosomal subunit protein bL17 (126 aa).

This sequence belongs to the bacterial ribosomal protein bL17 family. As to quaternary structure, part of the 50S ribosomal subunit. Contacts protein L32.

This chain is Large ribosomal subunit protein bL17, found in Nitrosococcus oceani (strain ATCC 19707 / BCRC 17464 / JCM 30415 / NCIMB 11848 / C-107).